A 209-amino-acid polypeptide reads, in one-letter code: Leucyl/phenylalanyl-tRNA--protein transferase (209 aa).

This sequence belongs to the L/F-transferase family.

It is found in the cytoplasm. It catalyses the reaction N-terminal L-lysyl-[protein] + L-leucyl-tRNA(Leu) = N-terminal L-leucyl-L-lysyl-[protein] + tRNA(Leu) + H(+). The enzyme catalyses N-terminal L-arginyl-[protein] + L-leucyl-tRNA(Leu) = N-terminal L-leucyl-L-arginyl-[protein] + tRNA(Leu) + H(+). The catalysed reaction is L-phenylalanyl-tRNA(Phe) + an N-terminal L-alpha-aminoacyl-[protein] = an N-terminal L-phenylalanyl-L-alpha-aminoacyl-[protein] + tRNA(Phe). Functionally, functions in the N-end rule pathway of protein degradation where it conjugates Leu, Phe and, less efficiently, Met from aminoacyl-tRNAs to the N-termini of proteins containing an N-terminal arginine or lysine. This chain is Leucyl/phenylalanyl-tRNA--protein transferase, found in Paramagnetospirillum magneticum (strain ATCC 700264 / AMB-1) (Magnetospirillum magneticum).